A 470-amino-acid polypeptide reads, in one-letter code: Cysteine--tRNA ligase (470 aa).

A Zn(2+)-binding site is contributed by C27. A 'HIGH' region motif is present at residues 29-39 (PTVYNFFHIGN). C211, H236, and E240 together coordinate Zn(2+). A 'KMSKS' region motif is present at residues 268–272 (KMSKS). K271 serves as a coordination point for ATP.

The protein belongs to the class-I aminoacyl-tRNA synthetase family. As to quaternary structure, monomer. Zn(2+) serves as cofactor.

Its subcellular location is the cytoplasm. The catalysed reaction is tRNA(Cys) + L-cysteine + ATP = L-cysteinyl-tRNA(Cys) + AMP + diphosphate. This is Cysteine--tRNA ligase from Clostridium botulinum (strain Alaska E43 / Type E3).